A 429-amino-acid polypeptide reads, in one-letter code: MMITLRKLPLAVAVAAGVMSAQALAVDFHGYARSGIGWTGSGGEQQCFKATGAQSKYRLGNECETYAELKLGQELWKEGDKSFYFDTNVAYSVNQEDDWESTSPAFREANIQGKNLIDWLPGSTLWAGKRFYQRHDVHMIDFYYWDISGPGAGLENVDLGFGKLSLAATRNSESGGSYTFSSDDTKKYAAKTANDVFDIRLAGLETNPGGVLELGVDYGRANPQDDYRLEDGASKDGWMWTGEHTQSIWGGFNKFVVQYATDAMTSWNSGHSQGTSIDNNGSMIRVLDHGAMDFNDDWGLMYVAMYQDVDLDSKNGSTWYTVGVRPMYKWTPIMSTQLEIGYDNVKSQRTSENNNQYKITLAQQWQAGNSVWSRPAIRIFATYAKWDENWGYSNTSGLQTKDSSGSGAFTSSRGDDSEVTFGAQMEVWW.

A signal peptide spans 1–25; it reads MMITLRKLPLAVAVAAGVMSAQALA. Polar residues predominate over residues 397-412; it reads GLQTKDSSGSGAFTSS. The disordered stretch occupies residues 397 to 416; the sequence is GLQTKDSSGSGAFTSSRGDD.

Belongs to the porin LamB (TC 1.B.3) family. As to quaternary structure, homotrimer formed of three 18-stranded antiparallel beta-barrels, containing three independent channels.

Its subcellular location is the cell outer membrane. The enzyme catalyses beta-maltose(in) = beta-maltose(out). Its function is as follows. Involved in the transport of maltose and maltodextrins. This Klebsiella pneumoniae subsp. pneumoniae (strain ATCC 700721 / MGH 78578) protein is Maltoporin 2.